The following is a 181-amino-acid chain: Adenine phosphoribosyltransferase (181 aa).

This sequence belongs to the purine/pyrimidine phosphoribosyltransferase family. Homodimer.

The protein localises to the cytoplasm. The catalysed reaction is AMP + diphosphate = 5-phospho-alpha-D-ribose 1-diphosphate + adenine. It participates in purine metabolism; AMP biosynthesis via salvage pathway; AMP from adenine: step 1/1. Its function is as follows. Catalyzes a salvage reaction resulting in the formation of AMP, that is energically less costly than de novo synthesis. The chain is Adenine phosphoribosyltransferase (Aprt) from Drosophila pseudoobscura pseudoobscura (Fruit fly).